The chain runs to 331 residues: UPF0194 membrane protein CKO_02332 (331 aa).

The N-terminal stretch at 1 to 15 (MKKPVVIALAVAALA) is a signal peptide. Residues 142–207 (ISANDLENAR…ELDLQDTTLI (66 aa)) adopt a coiled-coil conformation.

It belongs to the UPF0194 family.

The protein localises to the periplasm. The polypeptide is UPF0194 membrane protein CKO_02332 (Citrobacter koseri (strain ATCC BAA-895 / CDC 4225-83 / SGSC4696)).